The chain runs to 377 residues: Alanine racemase, catabolic (377 aa).

Lys51 acts as the Proton acceptor; specific for D-alanine in catalysis. Lys51 bears the N6-(pyridoxal phosphate)lysine mark. Arg150 contacts substrate. The active-site Proton acceptor; specific for L-alanine is Tyr272. Met320 serves as a coordination point for substrate.

This sequence belongs to the alanine racemase family. Pyridoxal 5'-phosphate serves as cofactor.

It carries out the reaction L-alanine = D-alanine. In terms of biological role, isomerizes L-alanine to D-alanine which is then oxidized to pyruvate by DadA. The protein is Alanine racemase, catabolic (dadX) of Rhizobium johnstonii (strain DSM 114642 / LMG 32736 / 3841) (Rhizobium leguminosarum bv. viciae).